Reading from the N-terminus, the 241-residue chain is Transmembrane protein 176A (241 aa).

S38 carries the post-translational modification Phosphoserine. Helical transmembrane passes span 65-85 (WVMQIVLGLLSGVLGGFLYIF), 93-113 (SGAPIWTGAVAVLAGAVAFIY), 127-147 (LLALAAFSTATAATIIGAGRF), and 193-213 (LFISINAMLLGVWVLLLLASL).

It belongs to the TMEM176 family. As to quaternary structure, interacts with MCOLN2.

Its subcellular location is the membrane. This Bos taurus (Bovine) protein is Transmembrane protein 176A (TMEM176A).